A 132-amino-acid polypeptide reads, in one-letter code: Aspartate 1-decarboxylase (132 aa).

The Schiff-base intermediate with substrate; via pyruvic acid role is filled by S25. Position 25 is a pyruvic acid (Ser) (S25). Residue T57 coordinates substrate. Y58 (proton donor) is an active-site residue. 73–75 (GAA) lines the substrate pocket.

It belongs to the PanD family. In terms of assembly, heterooctamer of four alpha and four beta subunits. Pyruvate serves as cofactor. Post-translationally, is synthesized initially as an inactive proenzyme, which is activated by self-cleavage at a specific serine bond to produce a beta-subunit with a hydroxyl group at its C-terminus and an alpha-subunit with a pyruvoyl group at its N-terminus.

It localises to the cytoplasm. It catalyses the reaction L-aspartate + H(+) = beta-alanine + CO2. It functions in the pathway cofactor biosynthesis; (R)-pantothenate biosynthesis; beta-alanine from L-aspartate: step 1/1. Its function is as follows. Catalyzes the pyruvoyl-dependent decarboxylation of aspartate to produce beta-alanine. In Geotalea uraniireducens (strain Rf4) (Geobacter uraniireducens), this protein is Aspartate 1-decarboxylase.